The sequence spans 175 residues: Adenine phosphoribosyltransferase (175 aa).

Belongs to the purine/pyrimidine phosphoribosyltransferase family. Homodimer.

The protein localises to the cytoplasm. It catalyses the reaction AMP + diphosphate = 5-phospho-alpha-D-ribose 1-diphosphate + adenine. Its pathway is purine metabolism; AMP biosynthesis via salvage pathway; AMP from adenine: step 1/1. Its function is as follows. Catalyzes a salvage reaction resulting in the formation of AMP, that is energically less costly than de novo synthesis. This chain is Adenine phosphoribosyltransferase, found in Synechococcus sp. (strain JA-3-3Ab) (Cyanobacteria bacterium Yellowstone A-Prime).